Reading from the N-terminus, the 350-residue chain is Phenylalanine--tRNA ligase alpha subunit (350 aa).

Glu257 contributes to the Mg(2+) binding site.

The protein belongs to the class-II aminoacyl-tRNA synthetase family. Phe-tRNA synthetase alpha subunit type 1 subfamily. Tetramer of two alpha and two beta subunits. The cofactor is Mg(2+).

Its subcellular location is the cytoplasm. The catalysed reaction is tRNA(Phe) + L-phenylalanine + ATP = L-phenylalanyl-tRNA(Phe) + AMP + diphosphate + H(+). This is Phenylalanine--tRNA ligase alpha subunit from Listeria monocytogenes serovar 1/2a (strain ATCC BAA-679 / EGD-e).